The primary structure comprises 150 residues: uncharacterized protein (150 aa).

The first 22 residues, 1–22, serve as a signal peptide directing secretion; sequence MVIALKRFSFLASIATLTVLNA. Cysteine 23 is lipidated: N-palmitoyl cysteine. Cysteine 23 carries the S-diacylglycerol cysteine lipid modification.

It belongs to the MG067/MG068/MG395 family.

The protein localises to the cell membrane. This is an uncharacterized protein from Mycoplasma pneumoniae (strain ATCC 29342 / M129 / Subtype 1) (Mycoplasmoides pneumoniae).